The primary structure comprises 490 residues: Glutamyl-tRNA(Gln) amidotransferase subunit A (490 aa).

Residues lysine 78 and serine 153 each act as charge relay system in the active site. Serine 177 serves as the catalytic Acyl-ester intermediate.

This sequence belongs to the amidase family. GatA subfamily. In terms of assembly, heterotrimer of A, B and C subunits.

The enzyme catalyses L-glutamyl-tRNA(Gln) + L-glutamine + ATP + H2O = L-glutaminyl-tRNA(Gln) + L-glutamate + ADP + phosphate + H(+). Functionally, allows the formation of correctly charged Gln-tRNA(Gln) through the transamidation of misacylated Glu-tRNA(Gln) in organisms which lack glutaminyl-tRNA synthetase. The reaction takes place in the presence of glutamine and ATP through an activated gamma-phospho-Glu-tRNA(Gln). This is Glutamyl-tRNA(Gln) amidotransferase subunit A from Bdellovibrio bacteriovorus (strain ATCC 15356 / DSM 50701 / NCIMB 9529 / HD100).